Consider the following 349-residue polypeptide: Protein MULTIPLE CHLOROPLAST DIVISION SITE 1 (349 aa).

The N-terminal 52 residues, 1-52, are a transit peptide targeting the chloroplast; it reads MASIDSLQFHSLCNLQSSIGRAKLQNPSSLVIFRRRPVNLNWVQFETKGSFV. Residues 53 to 116 lie on the Chloroplast intermembrane side of the membrane; sequence CKAIGDSSTP…VVFLMKKCSV (64 aa). Residues 117 to 139 form a helical membrane-spanning segment; sequence NSIWIGVCITATVLVAAIRAYVV. The Stromal segment spans residues 140–349; that stretch reads RKSRDNQRAG…NSSSEETHKS (210 aa). The interval 315–349 is disordered; sequence QRPYKFSAKLEGENIQKNSQENHTGNSSSEETHKS. The segment covering 329 to 343 has biased composition (polar residues); it reads IQKNSQENHTGNSSS.

In terms of assembly, interacts with MIND1. Interacts with ARC6 in the chloroplast stroma and binds to FtsZ2-1 in an ARC6-dependent manner.

The protein resides in the plastid. The protein localises to the chloroplast inner membrane. Functionally, required for chloroplast division. Together with MIND1 and ARC3, regulates FtsZ ring positioning in chloroplasts in an ARC6-dependent manner. Determines the site of chloroplast division in concert with MIND1. Not directly involved in ring formation, but required for MIND1 and MINE1 localization to regulate FtsZ ring formation during plastidial constriction. In Arabidopsis thaliana (Mouse-ear cress), this protein is Protein MULTIPLE CHLOROPLAST DIVISION SITE 1.